An 89-amino-acid chain; its full sequence is Small ribosomal subunit protein uS15 (89 aa).

It belongs to the universal ribosomal protein uS15 family. As to quaternary structure, part of the 30S ribosomal subunit. Forms a bridge to the 50S subunit in the 70S ribosome, contacting the 23S rRNA.

In terms of biological role, one of the primary rRNA binding proteins, it binds directly to 16S rRNA where it helps nucleate assembly of the platform of the 30S subunit by binding and bridging several RNA helices of the 16S rRNA. Its function is as follows. Forms an intersubunit bridge (bridge B4) with the 23S rRNA of the 50S subunit in the ribosome. The protein is Small ribosomal subunit protein uS15 of Heliobacterium modesticaldum (strain ATCC 51547 / Ice1).